Reading from the N-terminus, the 305-residue chain is Tetraspanin-12 (305 aa).

Residues 1-12 are Cytoplasmic-facing; that stretch reads MAREDSVKCLRC. Residues Cys-9 and Cys-12 are each lipidated (S-palmitoyl cysteine). The helical transmembrane segment at 13–33 threads the bilayer; that stretch reads LLYALNLLFWLMSISVLAVSA. The Extracellular portion of the chain corresponds to 34–59; the sequence is WMRDYLNNVLTLTAETRVEEAVILTY. Residues 60–80 form a helical membrane-spanning segment; it reads FPVVHPVMIAVCCFLIIVGML. Residues 81-89 are Cytoplasmic-facing; that stretch reads GYCGTVKRN. Cys-83 carries S-palmitoyl cysteine lipidation. Residues 90-110 form a helical membrane-spanning segment; it reads LLLLAWYFGSLLVIFCVELAC. The Extracellular segment spans residues 111–224; it reads GVWTYEQELM…RGTKQLQVLR (114 aa). A helical transmembrane segment spans residues 225–245; sequence FLGISIGVTQILAMILTITLL. Residues 246–305 are Cytoplasmic-facing; that stretch reads WALYYDRREPGTDQMMSLKNDNSQHLSCPSVELLKPSLSRIFEHTSMANSFNTHFEMEEL.

The protein belongs to the tetraspanin (TM4SF) family. As to quaternary structure, component of a complex, at least composed of TSPAN12, FZD4 and norrin (NDP). Interacts (when palmitoylated) with ADAM10. Interacts with MMP14/MT1-MMP. Palmitoylated; required for interaction with ADAM10. The precise position of palmitoylated residues is unclear and occurs either on Cys-9, Cys-12 and/or Cys-83.

Its subcellular location is the cell membrane. Regulator of cell surface receptor signal transduction. Plays a central role in retinal vascularization by regulating norrin (NDP) signal transduction. Acts in concert with norrin (NDP) to promote FZD4 multimerization and subsequent activation of FZD4, leading to promote accumulation of beta-catenin (CTNNB1) and stimulate LEF/TCF-mediated transcriptional programs. Suprisingly, it only activates the norrin (NDP)-dependent activation of FZD4, while it does not activate the Wnt-dependent activation of FZD4, suggesting the existence of a Wnt-independent signaling that also promote accumulation the beta-catenin (CTNNB1). Acts as a regulator of membrane proteinases such as ADAM10 and MMP14/MT1-MMP. Activates ADAM10-dependent cleavage activity of amyloid precursor protein (APP). Activates MMP14/MT1-MMP-dependent cleavage activity. The polypeptide is Tetraspanin-12 (TSPAN12) (Homo sapiens (Human)).